The sequence spans 90 residues: MSRTVNCIKLGREAEGLDFPPLPGELGKRVYESVSKEAWQGWLRYQTMLINENRLSLADARARQYLASQLDAYFFGQGADAPAGYTPPQN.

The protein belongs to the Fe(2+)-trafficking protein family.

Could be a mediator in iron transactions between iron acquisition and iron-requiring processes, such as synthesis and/or repair of Fe-S clusters in biosynthetic enzymes. This is Probable Fe(2+)-trafficking protein from Chromobacterium violaceum (strain ATCC 12472 / DSM 30191 / JCM 1249 / CCUG 213 / NBRC 12614 / NCIMB 9131 / NCTC 9757 / MK).